The sequence spans 393 residues: MQLRKTLLVGLVSVALLSGCSLFNSEEDVVTMSPLPKVENQFSPTKVWSTSVGSGVGDYYSHLRPAWQGTSVFAADRKGLVKAMDADTGKQIWQTDLSEKTNFLSSNHSAMLSGGVTASGSHVYVGSEKAVVYALNAYDGQVAWQTVVAGEALSRPVVSDGVVLIHTSNGMLQALNESDGAIKWTLNLDTPALSLRGESAPAVAFGAAIVGGDNGRVSAVMMEQGQLIWQQRISQVTGATEIDRLNDIDITPVVVDGVVYALAYNGNLTALDLRSGQILWKREIGSVNDFIVDAGRIYLVDQNDRIIALKSDGGVTLWSQSDLLHRNLTAPVMYNGYLVVGDAEGYLHWVNTDDGRFVAQQSVDSSGFLSAPVVASDKLLIQARSGTVYAFTR.

The first 19 residues, 1-19 (MQLRKTLLVGLVSVALLSG), serve as a signal peptide directing secretion. C20 carries N-palmitoyl cysteine lipidation. C20 is lipidated: S-diacylglycerol cysteine.

It belongs to the BamB family. As to quaternary structure, part of the Bam complex, which is composed of the outer membrane protein BamA, and four lipoproteins BamB, BamC, BamD and BamE.

Its subcellular location is the cell outer membrane. Its function is as follows. Part of the outer membrane protein assembly complex, which is involved in assembly and insertion of beta-barrel proteins into the outer membrane. The sequence is that of Outer membrane protein assembly factor BamB from Yersinia pestis.